Consider the following 104-residue polypeptide: Large ribosomal subunit protein uL24 (104 aa).

Belongs to the universal ribosomal protein uL24 family. Part of the 50S ribosomal subunit.

Its function is as follows. One of two assembly initiator proteins, it binds directly to the 5'-end of the 23S rRNA, where it nucleates assembly of the 50S subunit. One of the proteins that surrounds the polypeptide exit tunnel on the outside of the subunit. This is Large ribosomal subunit protein uL24 from Corynebacterium jeikeium (strain K411).